A 326-amino-acid chain; its full sequence is 4-hydroxythreonine-4-phosphate dehydrogenase (326 aa).

Residues H130 and T131 each contribute to the substrate site. A divalent metal cation contacts are provided by H160, H205, and H260. 3 residues coordinate substrate: K268, N277, and R286.

The protein belongs to the PdxA family. Homodimer. It depends on Zn(2+) as a cofactor. Requires Mg(2+) as cofactor. The cofactor is Co(2+).

It localises to the cytoplasm. The enzyme catalyses 4-(phosphooxy)-L-threonine + NAD(+) = 3-amino-2-oxopropyl phosphate + CO2 + NADH. The protein operates within cofactor biosynthesis; pyridoxine 5'-phosphate biosynthesis; pyridoxine 5'-phosphate from D-erythrose 4-phosphate: step 4/5. Functionally, catalyzes the NAD(P)-dependent oxidation of 4-(phosphooxy)-L-threonine (HTP) into 2-amino-3-oxo-4-(phosphooxy)butyric acid which spontaneously decarboxylates to form 3-amino-2-oxopropyl phosphate (AHAP). The chain is 4-hydroxythreonine-4-phosphate dehydrogenase from Aromatoleum aromaticum (strain DSM 19018 / LMG 30748 / EbN1) (Azoarcus sp. (strain EbN1)).